The primary structure comprises 779 residues: Translation initiation factor IF-2 (779 aa).

The tract at residues 44-193 (RQLDNAVDGT…TPPKPKELPE (150 aa)) is disordered. Over residues 53-65 (TNKKAEAPKKETT) the composition is skewed to basic and acidic residues. Positions 66–81 (SNENGNSKGPNKPNMT) are enriched in polar residues. Composition is skewed to low complexity over residues 82 to 93 (NSNEKSNKPNKP) and 117 to 167 (ANTS…NNKG). Positions 280-449 (ERPPVVTIMG…LLVSEVEELK (170 aa)) constitute a tr-type G domain. A G1 region spans residues 289 to 296 (GHVDHGKT). GTP is bound at residue 289–296 (GHVDHGKT). Residues 314 to 318 (GITQH) form a G2 region. The tract at residues 335 to 338 (DTPG) is G3. Residues 335–339 (DTPGH) and 389–392 (NKID) contribute to the GTP site. Residues 389–392 (NKID) form a G4 region. The tract at residues 425-427 (SAK) is G5.

The protein belongs to the TRAFAC class translation factor GTPase superfamily. Classic translation factor GTPase family. IF-2 subfamily.

It is found in the cytoplasm. In terms of biological role, one of the essential components for the initiation of protein synthesis. Protects formylmethionyl-tRNA from spontaneous hydrolysis and promotes its binding to the 30S ribosomal subunits. Also involved in the hydrolysis of GTP during the formation of the 70S ribosomal complex. The sequence is that of Translation initiation factor IF-2 from Listeria monocytogenes serovar 1/2a (strain ATCC BAA-679 / EGD-e).